The chain runs to 328 residues: 4-hydroxythreonine-4-phosphate dehydrogenase (328 aa).

2 residues coordinate substrate: H134 and T135. 3 residues coordinate a divalent metal cation: H164, H209, and H264. Residues K272, N281, and R290 each coordinate substrate.

The protein belongs to the PdxA family. In terms of assembly, homodimer. The cofactor is Zn(2+). Mg(2+) is required as a cofactor. Co(2+) serves as cofactor.

It is found in the cytoplasm. It carries out the reaction 4-(phosphooxy)-L-threonine + NAD(+) = 3-amino-2-oxopropyl phosphate + CO2 + NADH. The protein operates within cofactor biosynthesis; pyridoxine 5'-phosphate biosynthesis; pyridoxine 5'-phosphate from D-erythrose 4-phosphate: step 4/5. Functionally, catalyzes the NAD(P)-dependent oxidation of 4-(phosphooxy)-L-threonine (HTP) into 2-amino-3-oxo-4-(phosphooxy)butyric acid which spontaneously decarboxylates to form 3-amino-2-oxopropyl phosphate (AHAP). In Shewanella denitrificans (strain OS217 / ATCC BAA-1090 / DSM 15013), this protein is 4-hydroxythreonine-4-phosphate dehydrogenase.